The primary structure comprises 194 residues: MNQPIEPDHINVPTEALESLRLRLTQVSHSLNTLQAQLHQPTLPPWSSLHNQFNVLLTQLVSLSSTITHQSDILQQTVTFPLPAFPTATEAGLMATLLRKKILPEVEEWCEEVKQKALGVKIRTVDQYGEWAAETVEEAKQEYEWYGLMTREEVDNGVKPPVYVAPEEEAGEGAKLTIEQILQFTCAGKMPTVA.

This sequence belongs to the Mediator complex subunit 8 family. As to quaternary structure, component of the Mediator complex.

The protein resides in the nucleus. Component of the Mediator complex, a coactivator involved in the regulated transcription of nearly all RNA polymerase II-dependent genes. Mediator functions as a bridge to convey information from gene-specific regulatory proteins to the basal RNA polymerase II transcription machinery. Mediator is recruited to promoters by direct interactions with regulatory proteins and serves as a scaffold for the assembly of a functional preinitiation complex with RNA polymerase II and the general transcription factors. The sequence is that of Mediator of RNA polymerase II transcription subunit 8 (MED8) from Yarrowia lipolytica (strain CLIB 122 / E 150) (Yeast).